The sequence spans 272 residues: Replication-associated protein A (272 aa).

The CRESS-DNA virus Rep endonuclease domain maps to 11 to 114; that stretch reads LHRTANTFLT…PLALFERGTF (104 aa). The RCR-1 motif lies at 18–21; the sequence is FLTY. Residues Glu-52, His-60, and His-62 each coordinate a divalent metal cation. Residues 60–62 carry the RCR-2 motif; that stretch reads HLH. Tyr-100 acts as the For DNA cleavage activity in catalysis. Positions 100–103 match the RCR-3 motif; the sequence is YILK. Glu-104 contributes to the a divalent metal cation binding site. Positions 175–187 are oligomerization; sequence SANKLFPDIQEEF. The segment at 198 to 202 is binding to RBR1; that stretch reads LLCNE. The segment at 221-230 is transactivation; it reads MLLQPNCYTV. Positions 250–265 are enriched in polar residues; that stretch reads DQESRASTSSVQQGQE. A disordered region spans residues 250–272; that stretch reads DQESRASTSSVQQGQENLLGPEA.

The protein belongs to the geminiviridae Rep protein family. In terms of assembly, homooligomer. Interacts with host retinoblastoma-related protein 1 (RBR1), and may thereby deregulate the host cell cycle. Part of the C- and V-complexes which are RepA-Rep-DNA complexes involved in the c-sense and v-sense transcription. It depends on Mg(2+) as a cofactor. Mn(2+) is required as a cofactor.

Its subcellular location is the host nucleus. It is found in the host cytoplasm. Functionally, implicated in enhancement of V-sense gene expression. Acts a an inhibitor of C-sense gene transcription. The chain is Replication-associated protein A from Avena sativa (Oat).